The sequence spans 395 residues: DDB1- and CUL4-associated factor 4-like protein 2 (395 aa).

2 WD repeats span residues Ser268–Gln307 and Val312–Thr351.

The chain is DDB1- and CUL4-associated factor 4-like protein 2 (DCAF4L2) from Homo sapiens (Human).